The following is a 66-amino-acid chain: Large ribosomal subunit protein bL35 (66 aa).

Belongs to the bacterial ribosomal protein bL35 family.

This is Large ribosomal subunit protein bL35 from Brucella canis (strain ATCC 23365 / NCTC 10854 / RM-666).